Consider the following 473-residue polypeptide: Lactate utilization protein B (473 aa).

4Fe-4S ferredoxin-type domains follow at residues 302 to 332 and 351 to 380; these read GSEF…GHSY and YNDY…LHDL. Residues cysteine 311, cysteine 314, cysteine 317, cysteine 321, cysteine 364, cysteine 367, and cysteine 371 each coordinate [4Fe-4S] cluster.

It belongs to the LutB/YkgF family.

In terms of biological role, is involved in L-lactate degradation and allows cells to grow with lactate as the sole carbon source. Has probably a role as an electron transporter during oxidation of L-lactate. The polypeptide is Lactate utilization protein B (Bacillus cereus (strain AH820)).